Consider the following 605-residue polypeptide: Leucine-rich repeat-containing protein 40 (605 aa).

The interval 1–26 (MSRFRRGGKAPDPLSGFRAPKEQEPA) is disordered. LRR repeat units lie at residues 83 to 104 (DLTK…ISLL), 106 to 127 (ALVV…IKEL), 129 to 151 (NLQK…QHLQ), 152 to 173 (NLKS…IGHL), 175 to 196 (ILEE…VGQL), 198 to 219 (GLVK…IGKM), 221 to 242 (NLKQ…VAGM), 244 to 265 (SLEQ…PFLT), 266 to 287 (KLKE…HLQN), 290 to 311 (SLSV…ISLL), 313 to 335 (GLER…GSLP), 336 to 357 (NLKS…ILNK), 429 to 450 (FITT…IVEM), 453 to 475 (SVCD…CMLL), 476 to 497 (KLTH…MEAM), 499 to 520 (RLQS…LYRI), 522 to 543 (TLET…QLIK), 546 to 567 (KLST…LGNC), and 569 to 590 (SLRA…ILAK).

The sequence is that of Leucine-rich repeat-containing protein 40 (lrrc40) from Xenopus tropicalis (Western clawed frog).